Here is a 1475-residue protein sequence, read N- to C-terminus: Peroxidasin homolog (1475 aa).

Positions 1–23 are cleaved as a signal peptide; the sequence is MAVRPTRRCLLALLLCFAWWAMA. One can recognise an LRRNT domain in the interval 24–60; the sequence is VVASKQGAGCPSRCLCFRTTVRCMHLLLEAVPAVAPQ. Cystine bridges form between C33-C39 and C37-C46. 6 LRR repeats span residues 58–81, 82–105, 107–129, 130–153, 154–177, and 179–201; these read APQT…AFRR, LRSL…AFED, ENLK…AFKG, LASL…SFQH, LPKL…TFSQ, and ESMK…LWLA. Residues 189–241 form the LRRCT domain; the sequence is NALHCDCEILWLADLLKTYAQSGNAQAAATCEYPRRIQGRSVATITPEELNCE. Intrachain disulfides connect C193/C240, C195/C219, C264/C314, C360/C409, C451/C499, and C543/C591. 4 Ig-like C2-type domains span residues 243 to 329, 339 to 425, 430 to 517, and 518 to 607; these read PRIT…QEVT, PTFV…AFII, PQFT…LTVQ, and PRVT…MVLS. N387 carries N-linked (GlcNAc...) asparagine glycosylation. An LRR 7 repeat occupies 402 to 425; sequence SDSGEYTCFASNSVDSIHATAFII. N637, N696, N716, and N728 each carry an N-linked (GlcNAc...) asparagine glycan. 4 disulfide bridges follow: C720-C882, C729-C745, C844-C854, and C848-C872. D823 contacts heme b. Residue H824 is the Proton acceptor of the active site. Position 825 (D825) interacts with Ca(2+). Residues T904, Y906, D908, and S910 each coordinate Ca(2+). An intrachain disulfide couples C956 to C967. N961 is a glycosylation site (N-linked (GlcNAc...) asparagine). Residues E977 and H1071 each coordinate heme b. Residues 1148–1172 form an LRR 8 repeat; sequence ALDLAAINIQRGRDHGIPPYHDYRV. The residue at position 1173 (Y1173) is a Phosphotyrosine. 2 disulfide bridges follow: C1174–C1231 and C1272–C1298. N-linked (GlcNAc...) asparagine glycosylation is present at N1175. Residue S1177 is modified to Phosphoserine. One copy of the LRR 9 repeat lies at 1267 to 1288; the sequence is LARILCDNSDNITRVQQDVFRV. Residues N1277 and N1364 are each glycosylated (N-linked (GlcNAc...) asparagine). Residues 1312-1407 form a required in homotrimerization region; it reads CCEDCRTRGQ…QINSLESRLS (96 aa). The region spanning 1409 to 1467 is the VWFC domain; it reads TECVDDSGESHGGNTKWKKDPCTVCECKNGQITCFVEACQPAACPQPVKVEGACCPVCL.

Belongs to the peroxidase family. XPO subfamily. As to quaternary structure, homotrimer; disulfide-linked. The homotrimer form is predominant. Homooligomer; disulfide-linked. Oligomerization occurs intracellularly before C-terminal proteolytic cleavage. Interacts with PXDNL; this interaction inhibits the peroxidase activity of PXDN. It depends on Ca(2+) as a cofactor. The cofactor is heme b. Processed by FURIN and the proteolytic processing largely depends on the peroxidase activity of PXDN. The proteolytic cleavage occurs after intracellular homotrimerization and releases into the extracellular matrix a large, catalytically active fragment and a smaller fragment consisting primarily of the C-terminal VWFC domain. The processing enhances both peroxidase activity and sulfilimine cross-links formation. Highly expressed in the cardiovascular system. In the embryo, expressed in the corneal epithelial layer. In the adult eyes, expressed in the corneal and lens epithelium. Expressed in lung.

The protein resides in the secreted. It is found in the extracellular space. Its subcellular location is the extracellular matrix. The protein localises to the endoplasmic reticulum. It localises to the cell surface. The protein resides in the basement membrane. The catalysed reaction is L-lysyl-[collagen] + L-methionyl-[collagen] + H2O2 = [collagen]-L-lysyl-N-S-L-methionyl-[collagen] + 2 H2O + H(+). The enzyme catalyses bromide + H2O2 = hypobromite + H2O. It catalyses the reaction L-lysyl-[collagen] + L-methionyl-[collagen] + hypobromite = [collagen]-L-lysyl-N-S-L-methionyl-[collagen] + bromide + H2O + H(+). It carries out the reaction (5R)-5-hydroxy-L-lysyl-[collagen] + L-methionyl-[collagen] + hypobromite = [collagen]-(5R)-5-hydroxy-L-lysyl-N-S-L-methionyl-[collagen] + bromide + H2O + H(+). The catalysed reaction is (5R)-5-hydroxy-L-lysyl-[collagen] + L-methionyl-[collagen] + H2O2 = [collagen]-(5R)-5-hydroxy-L-lysyl-N-S-L-methionyl-[collagen] + 2 H2O + H(+). The enzyme catalyses L-tyrosyl-[protein] + bromide + H2O2 + H(+) = 3-bromo-L-tyrosyl-[protein] + 2 H2O. It catalyses the reaction hypobromite + L-tyrosyl-[protein] + H(+) = 3-bromo-L-tyrosyl-[protein] + H2O. Thiocyanate inhibits the formation of 3-bromotyrosine. Its function is as follows. Catalyzes the two-electron oxidation of bromide by hydrogen peroxide and generates hypobromite as a reactive intermediate which mediates the formation of sulfilimine cross-links between methionine and hydroxylysine residues within an uncross-linked collagen IV/COL4A1 NC1 hexamer. In turns, directly contributes to the collagen IV network-dependent fibronectin/FN and laminin assembly, which is required for full extracellular matrix (ECM)-mediated signaling. Thus, sulfilimine cross-links are essential for growth factor-induced cell proliferation and survival in endothelial cells, an event essential to basement membrane integrity. In addition, through the bromide oxidation, may promote tubulogenesis and induce angiogenesis through ERK1/2, Akt, and FAK pathways. Moreover brominates alpha2 collagen IV chain/COL4A2 at 'Tyr-1480' and leads to bromine enrichment of the basement membranes. In vitro, can also catalyze the two-electron oxidation of thiocyanate and iodide and these two substrates could effectively compete with bromide and thus inhibit the formation of sulfilimine bonds. Binds laminins. May play a role in the organization of eyeball structure and lens development during eye development. The protein is Peroxidasin homolog of Mus musculus (Mouse).